The primary structure comprises 188 residues: Phosphatidylinositol N-acetylglucosaminyltransferase subunit H (188 aa).

This sequence belongs to the PIGH family. In terms of assembly, component of the glycosylphosphatidylinositol-N-acetylglucosaminyltransferase (GPI-GnT) complex composed at least by PIGA, PIGC, PIGH, PIGP, PIGQ, PIGY and DPM2. Interacts with PIGQ.

It localises to the cytoplasm. The protein operates within glycolipid biosynthesis; glycosylphosphatidylinositol-anchor biosynthesis. In terms of biological role, part of the glycosylphosphatidylinositol-N-acetylglucosaminyltransferase (GPI-GnT) complex that catalyzes the transfer of N-acetylglucosamine from UDP-N-acetylglucosamine to phosphatidylinositol and participates in the first step of GPI biosynthesis. The protein is Phosphatidylinositol N-acetylglucosaminyltransferase subunit H of Homo sapiens (Human).